Here is a 251-residue protein sequence, read N- to C-terminus: Ubiquinone/menaquinone biosynthesis C-methyltransferase UbiE (251 aa).

S-adenosyl-L-methionine is bound by residues threonine 74, aspartate 95, 123-124 (NA), and serine 140.

It belongs to the class I-like SAM-binding methyltransferase superfamily. MenG/UbiE family.

The enzyme catalyses a 2-demethylmenaquinol + S-adenosyl-L-methionine = a menaquinol + S-adenosyl-L-homocysteine + H(+). The catalysed reaction is a 2-methoxy-6-(all-trans-polyprenyl)benzene-1,4-diol + S-adenosyl-L-methionine = a 5-methoxy-2-methyl-3-(all-trans-polyprenyl)benzene-1,4-diol + S-adenosyl-L-homocysteine + H(+). It participates in quinol/quinone metabolism; menaquinone biosynthesis; menaquinol from 1,4-dihydroxy-2-naphthoate: step 2/2. Its pathway is cofactor biosynthesis; ubiquinone biosynthesis. Methyltransferase required for the conversion of demethylmenaquinol (DMKH2) to menaquinol (MKH2) and the conversion of 2-polyprenyl-6-methoxy-1,4-benzoquinol (DDMQH2) to 2-polyprenyl-3-methyl-6-methoxy-1,4-benzoquinol (DMQH2). The polypeptide is Ubiquinone/menaquinone biosynthesis C-methyltransferase UbiE (Salmonella arizonae (strain ATCC BAA-731 / CDC346-86 / RSK2980)).